A 518-amino-acid chain; its full sequence is Sensory neuron membrane protein 1 (518 aa).

The Cytoplasmic portion of the chain corresponds to 1–8 (MKTAEKLG). Residues 9 to 29 (IIGTTISIFGIGFGWGVFPWL) traverse the membrane as a helical segment. The Extracellular segment spans residues 30–456 (IRMQIGRVSL…ELFRILQFLD (427 aa)). Residues Asn64, Asn186, Asn225, Asn316, Asn334, and Asn381 are each glycosylated (N-linked (GlcNAc...) asparagine). 3 disulfides stabilise this stretch: Cys265-Cys330, Cys294-Cys349, and Cys332-Cys338. A helical membrane pass occupies residues 457–477 (VIKWVITLFGAGVVSGGVGLY). Over 478 to 518 (YKEKNSLPITPTSSATSKKIDNPTDKTTTHELGHTNFGYIN) the chain is Cytoplasmic.

This sequence belongs to the CD36 family.

Its subcellular location is the cell membrane. Plays an olfactory role that is not restricted to pheromone sensitivity. The chain is Sensory neuron membrane protein 1 from Pediculus humanus subsp. corporis (Body louse).